The following is a 219-amino-acid chain: Beta-crystallin B2 (219 aa).

An N-acetylalanine modification is found at Ala-2. Residues 2–16 are N-terminal arm; that stretch reads ASEHQMPASKQQPAS. 2 Beta/gamma crystallin 'Greek key' domains span residues 17–56 and 57–101; these read PNIA…LVHS and GPWV…RPIK. The tract at residues 102–120 is connecting peptide; sequence VVRAPRQPLPTRQTKDSQE. 2 Beta/gamma crystallin 'Greek key' domains span residues 121–162 and 163–205; these read HKIV…RVQS and GTWV…RRIR. The C-terminal arm stretch occupies residues 207-219; it reads MQWHQRGAYHPSN.

It belongs to the beta/gamma-crystallin family. As to quaternary structure, homo/heterodimer, or complexes of higher-order. The structure of beta-crystallin oligomers seems to be stabilized through interactions between the N-terminal arms.

In terms of biological role, crystallins are the dominant structural components of the vertebrate eye lens. This Gallus gallus (Chicken) protein is Beta-crystallin B2 (CRYBB2).